The chain runs to 875 residues: Ribonucleases P/MRP protein subunit POP1 (875 aa).

3 disordered regions span residues 1 to 20 (MSGS…KNQL), 35 to 54 (EAVA…SESG), and 119 to 140 (EMRK…RKAH). Positions 39–54 (ASSTKTGTPSDLSESG) are enriched in polar residues. Phosphothreonine is present on Thr-524.

Component of nuclear RNase P and RNase MRP complexes. RNase P consists of an RNA moiety and at least 9 protein subunits including POP1, POP3, POP4, POP5, POP6, POP7, POP8, RPP1 and RPR2. RNase MRP complex consists of an RNA moiety and at least 10 protein subunits including POP1, POP3, POP4, POP5, POP6, POP7, POP8, RMP1, RPP1 and SNM1, many of which are shared with the RNase P complex.

It localises to the cytoplasm. The protein resides in the nucleus. The catalysed reaction is Endonucleolytic cleavage of RNA, removing 5'-extranucleotides from tRNA precursor.. In terms of biological role, required for processing of 5.8S rRNA (short form) at site A3 and for 5' and 3' processing of pre-tRNA. This chain is Ribonucleases P/MRP protein subunit POP1 (POP1), found in Saccharomyces cerevisiae (strain ATCC 204508 / S288c) (Baker's yeast).